The chain runs to 341 residues: Chorismate synthase (341 aa).

Disordered regions lie at residues 45-64 (LERR…GRQE) and 109-134 (HADD…GRET). R48 contacts NADP(+). FMN contacts are provided by residues 128-130 (RSS), G280, 295-299 (KPTSS), and R308.

Belongs to the chorismate synthase family. Homotetramer. FMNH2 is required as a cofactor.

The catalysed reaction is 5-O-(1-carboxyvinyl)-3-phosphoshikimate = chorismate + phosphate. The protein operates within metabolic intermediate biosynthesis; chorismate biosynthesis; chorismate from D-erythrose 4-phosphate and phosphoenolpyruvate: step 7/7. Functionally, catalyzes the anti-1,4-elimination of the C-3 phosphate and the C-6 proR hydrogen from 5-enolpyruvylshikimate-3-phosphate (EPSP) to yield chorismate, which is the branch point compound that serves as the starting substrate for the three terminal pathways of aromatic amino acid biosynthesis. This reaction introduces a second double bond into the aromatic ring system. This Bdellovibrio bacteriovorus (strain ATCC 15356 / DSM 50701 / NCIMB 9529 / HD100) protein is Chorismate synthase.